A 156-amino-acid polypeptide reads, in one-letter code: Phosphopantetheine adenylyltransferase (156 aa).

Thr-9 lines the substrate pocket. ATP contacts are provided by residues 9–10 and His-17; that span reads TF. Substrate contacts are provided by Lys-41, Leu-73, and Arg-87. ATP is bound by residues 88–90, Glu-98, and 123–129; these read GVR and WAFVSST.

This sequence belongs to the bacterial CoaD family. As to quaternary structure, homohexamer. It depends on Mg(2+) as a cofactor.

Its subcellular location is the cytoplasm. The catalysed reaction is (R)-4'-phosphopantetheine + ATP + H(+) = 3'-dephospho-CoA + diphosphate. It functions in the pathway cofactor biosynthesis; coenzyme A biosynthesis; CoA from (R)-pantothenate: step 4/5. Reversibly transfers an adenylyl group from ATP to 4'-phosphopantetheine, yielding dephospho-CoA (dPCoA) and pyrophosphate. This Haemophilus influenzae (strain 86-028NP) protein is Phosphopantetheine adenylyltransferase.